The following is a 469-amino-acid chain: Ubiquitin carboxyl-terminal hydrolase MINDY-1 (469 aa).

The disordered stretch occupies residues 1–85; the sequence is MEYHQPEDPA…APPGPTLGTL (85 aa). Residues 23–53 show a composition bias toward basic and acidic residues; that stretch reads ENHEVLAGPDEHPQDTDARDADGEAREREPA. Over residues 66–76 the composition is skewed to low complexity; the sequence is LESPLPEASSA. Ser-103 carries the phosphoserine modification. Cys-137 acts as the Nucleophile in catalysis. His-319 acts as the Proton acceptor in catalysis. A ubiquitin-binding domain (UBD) region spans residues 388-426; sequence QVDQDYLIALSLQQQQPRGPLGLTDLELAQQLQQEEYQQ. Ser-441 is subject to Phosphoserine. The segment at 441–469 is disordered; it reads SLQGRGATSGRPAGERRQRPKHESDCILL. Residues 453-469 are compositionally biased toward basic and acidic residues; it reads AGERRQRPKHESDCILL.

Belongs to the MINDY deubiquitinase family. FAM63 subfamily.

It catalyses the reaction Thiol-dependent hydrolysis of ester, thioester, amide, peptide and isopeptide bonds formed by the C-terminal Gly of ubiquitin (a 76-residue protein attached to proteins as an intracellular targeting signal).. Functionally, hydrolase that can specifically remove 'Lys-48'-linked conjugated ubiquitin from proteins. Has exodeubiquitinase activity and has a preference for long polyubiquitin chains. May play a regulatory role at the level of protein turnover. The chain is Ubiquitin carboxyl-terminal hydrolase MINDY-1 from Homo sapiens (Human).